Consider the following 327-residue polypeptide: Mitochondrial substrate carrier family protein A (327 aa).

Residues 1–36 (MVINNQNNNNQNNNQNNNNKNDNLNNSTTTTTTTAT) form a disordered region. At 1-48 (MVINNQNNNNQNNNQNNNNKNDNLNNSTTTTTTTATTTKSSTLFHSND) the chain is on the mitochondrial intermembrane side. Solcar repeat units follow at residues 43–132 (LFHS…FKRM), 140–224 (ISVI…IKEK), and 233–323 (PPLY…AITL). A helical transmembrane segment spans residues 49 to 66 (FFSGLIAGIVSRTLTAPL). Over 67–106 (ERIKILNQVEVILKDGTKYNRIIPAFKVIIKEEGIAGLFR) the chain is Mitochondrial matrix. Residues 107–127 (GNFVNIIKAGPQSAIRFYSYG) traverse the membrane as a helical segment. Topologically, residues 128–145 (AFKRMASEPDGSISVINR) are mitochondrial intermembrane. A helical transmembrane segment spans residues 146–166 (MWAGASSGVVSVALTHPLDVI). Residues 167–192 (KTHITVIAPTAATIKNVTKGIYRDLG) are Mitochondrial matrix-facing. Residues 193 to 213 (IIGFFRGLSAGILNIAPFAAL) form a helical membrane-spanning segment. Residues 214–238 (NFTFYETIKEKTQQYILKSPPLYAP) are Mitochondrial intermembrane-facing. Residues 239 to 259 (SIYGAISGGLTMTILYPLDVV) traverse the membrane as a helical segment. Topologically, residues 260–303 (KRRIMLQHFDRNQLPIYKNFIDAIIKITKTEGISALYKGIRPAY) are mitochondrial matrix. Residues 304–324 (LKVIPTVSINFLIYEGAITLF) form a helical membrane-spanning segment. Over 325–327 (EKK) the chain is Mitochondrial intermembrane.

The protein belongs to the mitochondrial carrier (TC 2.A.29) family.

It is found in the mitochondrion inner membrane. In terms of biological role, calcium-dependent mitochondrial solute carrier. Mitochondrial solute carriers shuttle metabolites, nucleotides, and cofactors through the mitochondrial inner membrane. In Dictyostelium discoideum (Social amoeba), this protein is Mitochondrial substrate carrier family protein A (mcfA).